The sequence spans 320 residues: HPr kinase/phosphorylase (320 aa).

Catalysis depends on residues histidine 141 and lysine 162. Residue 156-163 coordinates ATP; sequence GHSGLGKS. Serine 163 serves as a coordination point for Mg(2+). Catalysis depends on aspartate 180, which acts as the Proton acceptor; for phosphorylation activity. Proton donor; for dephosphorylation activity. The interval 204–213 is important for the catalytic mechanism of both phosphorylation and dephosphorylation; the sequence is LEVRGLGILN. Position 205 (glutamate 205) interacts with Mg(2+). The active site involves arginine 248. Positions 269 to 274 are important for the catalytic mechanism of dephosphorylation; that stretch reads PVAVGR.

This sequence belongs to the HPrK/P family. In terms of assembly, homohexamer. Mg(2+) is required as a cofactor.

It carries out the reaction [HPr protein]-L-serine + ATP = [HPr protein]-O-phospho-L-serine + ADP + H(+). The catalysed reaction is [HPr protein]-O-phospho-L-serine + phosphate + H(+) = [HPr protein]-L-serine + diphosphate. In terms of biological role, catalyzes the ATP- as well as the pyrophosphate-dependent phosphorylation of a specific serine residue in HPr, a phosphocarrier protein of the phosphoenolpyruvate-dependent sugar phosphotransferase system (PTS). HprK/P also catalyzes the pyrophosphate-producing, inorganic phosphate-dependent dephosphorylation (phosphorolysis) of seryl-phosphorylated HPr (P-Ser-HPr). In Neisseria gonorrhoeae (strain ATCC 700825 / FA 1090), this protein is HPr kinase/phosphorylase.